Reading from the N-terminus, the 374-residue chain is MNLIEIREGKASLLIPNPKDYEKEGRYDPSWSPVFYNPKMRLNRDISVLALSVIKPKSVVDALSASGVRGIRYYTEIGGIEKLILNDKNPIATELIKKNAEKNYVNARITTKDANSLLYEIKADFVDIDPFGSPAPFILSAINATINKGYVAFTATDLSALECSSKFSARRKYDLICERLSFSKELGIRGLIAKVIREGAIIEKAAYPIFSFYFDYYYRVFFRIENGAKKVDKLLEKQGYYYECSKCGYREVDYYAERKICPRCGIEMRRYGPAWTGELWNREFLLSMKENLKNFTYFDTFMQVNKLLNILVEESKYVSPYFRLDFIASLIKRNIPKREKMLECLKEASITHFDYRGIKTNKEIDEIVNCIKIN.

A Trm1 methyltransferase domain is found at 4–371 (IEIREGKASL…KEIDEIVNCI (368 aa)). Positions 44, 69, 87, 113, and 114 each coordinate S-adenosyl-L-methionine. Zn(2+)-binding residues include Cys244, Cys247, Cys261, and Cys264.

It belongs to the class I-like SAM-binding methyltransferase superfamily. Trm1 family.

The catalysed reaction is guanosine(26) in tRNA + 2 S-adenosyl-L-methionine = N(2)-dimethylguanosine(26) in tRNA + 2 S-adenosyl-L-homocysteine + 2 H(+). Its function is as follows. Dimethylates a single guanine residue at position 26 of a number of tRNAs using S-adenosyl-L-methionine as donor of the methyl groups. The protein is tRNA (guanine(26)-N(2))-dimethyltransferase of Sulfurisphaera tokodaii (strain DSM 16993 / JCM 10545 / NBRC 100140 / 7) (Sulfolobus tokodaii).